We begin with the raw amino-acid sequence, 134 residues long: Agouti-related protein (134 aa).

The first 20 residues, 1–20 (MLTAVLLSCALLLAMPPLQG), serve as a signal peptide directing secretion. A propeptide spanning residues 21–84 (AQMGPAPLEG…VLDPEGRKPR (64 aa)) is cleaved from the precursor. Disulfide bonds link cysteine 89/cysteine 104, cysteine 96/cysteine 110, cysteine 103/cysteine 121, cysteine 107/cysteine 131, and cysteine 112/cysteine 119. The Agouti domain occupies 89–131 (CVRLHESCLGHQVPCCDPCATCYCRFFNAFCYCRKLGTTTNPC). The interval 113-115 (RFF) is interaction with melanocortin receptors.

As to quaternary structure, interacts with melanocortin receptors MC3R, MC4R and MC5R.

The protein localises to the secreted. Its subcellular location is the golgi apparatus lumen. Functionally, plays a role in weight homeostasis. Involved in the control of feeding behavior through the central melanocortin system. Acts as alpha melanocyte-stimulating hormone antagonist by inhibiting cAMP production mediated by stimulation of melanocortin receptors within the hypothalamus and adrenal gland. Has very low activity with MC5R. Is an inverse agonist for MC3R and MC4R being able to suppress their constitutive activity. It promotes MC3R and MC4R endocytosis in an arrestin-dependent manner. In Bos taurus (Bovine), this protein is Agouti-related protein (AGRP).